We begin with the raw amino-acid sequence, 22 residues long: NDMA-dependent alcohol dehydrogenase (22 aa).

The protein belongs to the zinc-containing alcohol dehydrogenase family. Homotetramer. NADH is required as a cofactor.

The protein localises to the cytoplasm. The enzyme catalyses N,N-dimethyl-4-nitrosoaniline + a primary alcohol = 4-(hydroxylamino)-N,N-dimethylaniline + an aldehyde. It catalyses the reaction ethanol + A = acetaldehyde + AH2. Functionally, this is a novel enzyme, catalytically different from common alcohol dehydrogenases. It is effective in oxidizing ethanol, other primary alcohols and benzylalcohol only in the presence of p-nitroso-N,N-dimethylaniline (NDMA) as an electron acceptor. NADH acts as a cofactor here instead of as a coenzyme. The sequence is that of NDMA-dependent alcohol dehydrogenase from Rhodococcus erythropolis (Arthrobacter picolinophilus).